A 220-amino-acid polypeptide reads, in one-letter code: Iron-sulfur cluster repair protein YtfE (220 aa).

This sequence belongs to the RIC family. YtfE subfamily. In terms of assembly, homodimer.

The protein resides in the cytoplasm. Functionally, di-iron-containing protein involved in the repair of iron-sulfur clusters damaged by oxidative and nitrosative stress conditions. The polypeptide is Iron-sulfur cluster repair protein YtfE (Shigella boydii serotype 18 (strain CDC 3083-94 / BS512)).